The following is a 144-amino-acid chain: Superoxide dismutase [Mn], mitochondrial (144 aa).

Residues H10, H58, and D143 each contribute to the Mn(2+) site.

Belongs to the iron/manganese superoxide dismutase family. Homotetramer. It depends on Mn(2+) as a cofactor.

The protein localises to the mitochondrion matrix. It catalyses the reaction 2 superoxide + 2 H(+) = H2O2 + O2. Functionally, destroys superoxide anion radicals which are normally produced within the cells and which are toxic to biological systems. This is Superoxide dismutase [Mn], mitochondrial from Apostichopus californicus (California sea cucumber).